The sequence spans 174 residues: Ubiquitin-like protein 4B (174 aa).

A Ubiquitin-like domain is found at 1–76 (MFLTVKLLLG…INVIMQPLEK (76 aa)). Residues 141–156 (EPHVEPAGERELEAKA) show a composition bias toward basic and acidic residues. The tract at residues 141–174 (EPHVEPAGERELEAKARPQSSCDMEEKEEAAADQ) is disordered. Residues 163–174 (DMEEKEEAAADQ) show a composition bias toward acidic residues.

It localises to the cytoplasm. This chain is Ubiquitin-like protein 4B (UBL4B), found in Homo sapiens (Human).